We begin with the raw amino-acid sequence, 364 residues long: Probable tartrate dehydrogenase/decarboxylase TtuC (364 aa).

Mn(2+)-binding residues include Asp222, Asp246, and Asp250.

The protein belongs to the isocitrate and isopropylmalate dehydrogenases family. The cofactor is Mg(2+). It depends on Mn(2+) as a cofactor. K(+) serves as cofactor.

It is found in the cytoplasm. The enzyme catalyses tartrate + NAD(+) = 2-hydroxy-3-oxosuccinate + NADH + H(+). The catalysed reaction is (2R,3S)-tartrate + NAD(+) = 2-hydroxy-3-oxosuccinate + NADH + H(+). It catalyses the reaction (2R,3R)-tartrate + NAD(+) = 2-hydroxy-3-oxosuccinate + NADH + H(+). It carries out the reaction (2R,3R)-tartrate + H(+) = (R)-glycerate + CO2. The enzyme catalyses (R)-malate + NAD(+) = pyruvate + CO2 + NADH. It functions in the pathway carbohydrate acid metabolism; tartrate degradation; 2-hydroxy-3-oxosuccinate from L-tartrate: step 1/1. It participates in carbohydrate acid metabolism; tartrate degradation; 2-hydroxy-3-oxosuccinate from meso-tartrate: step 1/1. The protein operates within carbohydrate acid metabolism; tartrate degradation; D-glycerate from L-tartrate: step 1/1. Its function is as follows. Has multiple catalytic activities. Apart from catalyzing the oxidation of (+)-tartrate to oxaloglycolate, also converts meso-tartrate to D-glycerate and catalyzes the oxidative decarboxylation of D-malate to pyruvate. This Agrobacterium vitis (Rhizobium vitis) protein is Probable tartrate dehydrogenase/decarboxylase TtuC (ttuC).